We begin with the raw amino-acid sequence, 264 residues long: Small ribosomal subunit protein uS2 (264 aa).

The interval 228-264 (VDTSATVDEEEAEVAEETESMESAEDLDADLIEEEAE) is disordered. Positions 234–264 (VDEEEAEVAEETESMESAEDLDADLIEEEAE) are enriched in acidic residues.

It belongs to the universal ribosomal protein uS2 family.

The polypeptide is Small ribosomal subunit protein uS2 (Symbiobacterium thermophilum (strain DSM 24528 / JCM 14929 / IAM 14863 / T)).